A 147-amino-acid chain; its full sequence is Histidine-containing phosphotransfer protein 1 (147 aa).

The region spanning 38–133 (APDFVSEVVT…YDLRNKFQAM (96 aa)) is the HPt domain. At histidine 79 the chain carries Phosphohistidine.

Two-component system major event consists of a His-to-Asp phosphorelay between a sensor histidine kinase (HK) and a response regulator (RR). In plants, the His-to-Asp phosphorelay involves an additional intermediate named Histidine-containing phosphotransfer protein (HPt). This multistep phosphorelay consists of a His-Asp-His-Asp sequential transfer of a phosphate group between first a His and an Asp of the HK protein, followed by the transfer to a conserved His of the HPt protein and finally the transfer to an Asp in the receiver domain of the RR protein. As to expression, widely expressed.

Its subcellular location is the cytoplasm. It localises to the cytosol. The protein localises to the nucleus. In terms of biological role, functions as a two-component phosphorelay mediators between cytokinin sensor histidine kinases and response regulators (B-type ARRs). Plays an important role in propagating cytokinin signal transduction through the multistep His-to-Asp phosphorelay. Functions as a positive regulator of the cytokinin signaling pathway. May play a regulatory role in salt and drought tolerance during plant development. The chain is Histidine-containing phosphotransfer protein 1 from Oryza sativa subsp. japonica (Rice).